Consider the following 435-residue polypeptide: Deoxybrevianamide E synthase (435 aa).

The tract at residues Met1–Ser28 is disordered. Glu96 provides a ligand contact to brevianamide F. Residues Arg110, Lys195, Tyr197, Lys265, Tyr267, Tyr354, Tyr419, and Tyr423 each contribute to the dimethylallyl diphosphate site.

The protein belongs to the tryptophan dimethylallyltransferase family. As to quaternary structure, monomer.

The catalysed reaction is brevianamide F + dimethylallyl diphosphate = deoxybrevianamide E + diphosphate. Its pathway is alkaloid biosynthesis. Its function is as follows. Deoxybrevianamide E synthase; part of the gene cluster that mediates the biosynthesis of notoamide, a fungal indole alkaloid that belongs to a family of natural products containing a characteristic bicyclo[2.2.2]diazaoctane core. The first step of notoamide biosynthesis involves coupling of L-proline and L-tryptophan by the bimodular NRPS notE', to produce cyclo-L-tryptophan-L-proline called brevianamide F. The reverse prenyltransferase notF' then acts as a deoxybrevianamide E synthase and converts brevianamide F to deoxybrevianamide E via reverse prenylation at C-2 of the indole ring leading to the bicyclo[2.2.2]diazaoctane core. Deoxybrevianamide E is further hydroxylated at C-6 of the indole ring, likely catalyzed by the cytochrome P450 monooxygenase notG', to yield 6-hydroxy-deoxybrevianamide E. 6-hydroxy-deoxybrevianamide E is a specific substrate of the prenyltransferase notC' for normal prenylation at C-7 to produce 6-hydroxy-7-prenyl-deoxybrevianamide, also called notoamide S. As the proposed pivotal branching point in notoamide biosynthesis, notoamide S can be diverted to notoamide E through an oxidative pyran ring closure putatively catalyzed by either notH' cytochrome P450 monooxygenase or the notD' FAD-linked oxidoreductase. This step would be followed by an indole 2,3-epoxidation-initiated pinacol-like rearrangement catalyzed by the notB' FAD-dependent monooxygenase leading to the formation of notoamide C and notoamide D. On the other hand notoamide S is converted to notoamide T by notH' (or notD'), a bifunctional oxidase that also functions as the intramolecular Diels-Alderase responsible for generation of (-)-notoamide T. To generate antipodal (+)-notoaminide T, notH (or notD) in Aspergillus strain MF297-2 is expected to catalyze a Diels-Alder reaction leading to the opposite stereochemistry. The remaining oxidoreductase notD' (or notH') likely catalyzes the oxidative pyran ring formation to yield (-)-stephacidin A. The FAD-dependent monooxygenase notI' is highly similar to notB' and is predicted to catalyze a similar conversion from (-)-stephacidin A to (+)-notoamide B via the 2,3-epoxidation of (-)-stephacidin A followed by a pinacol-type rearrangement. Finally, it remains unclear which enzyme could be responsible for the final hydroxylation steps leading to notoamide A and sclerotiamide. In Aspergillus versicolor, this protein is Deoxybrevianamide E synthase.